We begin with the raw amino-acid sequence, 156 residues long: Sensor histidine kinase component HK2 (156 aa).

Over 1-42 the chain is Extracellular; it reads MALVLAAAGAVTVVQFRDAAHEADPDGALRGLTDDITADLVR. Residues 43–63 form a helical membrane-spanning segment; that stretch reads ELVTILPIVLVIAAVAAYLLS. Residues 64 to 120 enclose the HAMP domain; it reads RAALRPVDRIRAAAQTLTTTPHPDTDAPLPVPPTDDEIAWLATTLNTMLTRLQRALA. The Cytoplasmic segment spans residues 64–156; the sequence is RAALRPVDRI…RCAGPDPPTS (93 aa). In terms of domain architecture, Histidine kinase; first part spans 128-156; it reads DASHELRTPLALLTTELELRCAGPDPPTS. Histidine 131 carries the phosphohistidine; by autocatalysis modification.

In terms of assembly, homodimer. Each monomer interacts with HK1 and the receiver domain of TcrA. Post-translationally, phosphorylated by HK1.

Its subcellular location is the cell membrane. It catalyses the reaction ATP + protein L-histidine = ADP + protein N-phospho-L-histidine.. Functionally, member of the three-protein two-component system HK1/HK2/TcrA. HK2 transfers its phosphoryl group to TcrA. The sequence is that of Sensor histidine kinase component HK2 from Mycobacterium tuberculosis (strain ATCC 25618 / H37Rv).